Here is a 132-residue protein sequence, read N- to C-terminus: Small ribosomal subunit protein uS8 (132 aa).

The protein belongs to the universal ribosomal protein uS8 family. As to quaternary structure, part of the 30S ribosomal subunit. Contacts proteins S5 and S12.

In terms of biological role, one of the primary rRNA binding proteins, it binds directly to 16S rRNA central domain where it helps coordinate assembly of the platform of the 30S subunit. The protein is Small ribosomal subunit protein uS8 of Leuconostoc mesenteroides subsp. mesenteroides (strain ATCC 8293 / DSM 20343 / BCRC 11652 / CCM 1803 / JCM 6124 / NCDO 523 / NBRC 100496 / NCIMB 8023 / NCTC 12954 / NRRL B-1118 / 37Y).